Consider the following 193-residue polypeptide: Acyl carrier protein phosphodiesterase (193 aa).

This sequence belongs to the AcpH family.

It catalyses the reaction holo-[ACP] + H2O = apo-[ACP] + (R)-4'-phosphopantetheine + H(+). In terms of biological role, converts holo-ACP to apo-ACP by hydrolytic cleavage of the phosphopantetheine prosthetic group from ACP. The sequence is that of Acyl carrier protein phosphodiesterase from Escherichia coli O139:H28 (strain E24377A / ETEC).